The sequence spans 513 residues: Bifunctional purine biosynthesis protein PurH (513 aa).

Positions 1 to 144 constitute an MGS-like domain; the sequence is MKRALISVSD…KNYQDVTVVT (144 aa).

Belongs to the PurH family.

The catalysed reaction is (6R)-10-formyltetrahydrofolate + 5-amino-1-(5-phospho-beta-D-ribosyl)imidazole-4-carboxamide = 5-formamido-1-(5-phospho-D-ribosyl)imidazole-4-carboxamide + (6S)-5,6,7,8-tetrahydrofolate. The enzyme catalyses IMP + H2O = 5-formamido-1-(5-phospho-D-ribosyl)imidazole-4-carboxamide. It participates in purine metabolism; IMP biosynthesis via de novo pathway; 5-formamido-1-(5-phospho-D-ribosyl)imidazole-4-carboxamide from 5-amino-1-(5-phospho-D-ribosyl)imidazole-4-carboxamide (10-formyl THF route): step 1/1. It functions in the pathway purine metabolism; IMP biosynthesis via de novo pathway; IMP from 5-formamido-1-(5-phospho-D-ribosyl)imidazole-4-carboxamide: step 1/1. In Lactobacillus acidophilus (strain ATCC 700396 / NCK56 / N2 / NCFM), this protein is Bifunctional purine biosynthesis protein PurH.